The sequence spans 384 residues: Lipid-A-disaccharide synthase 1 (384 aa).

The protein belongs to the LpxB family.

It catalyses the reaction a lipid X + a UDP-2-N,3-O-bis[(3R)-3-hydroxyacyl]-alpha-D-glucosamine = a lipid A disaccharide + UDP + H(+). Its pathway is bacterial outer membrane biogenesis; LPS lipid A biosynthesis. Functionally, condensation of UDP-2,3-diacylglucosamine and 2,3-diacylglucosamine-1-phosphate to form lipid A disaccharide, a precursor of lipid A, a phosphorylated glycolipid that anchors the lipopolysaccharide to the outer membrane of the cell. The chain is Lipid-A-disaccharide synthase 1 from Legionella pneumophila (strain Paris).